A 415-amino-acid polypeptide reads, in one-letter code: MATRNSPMALGTAQGDPGEAGTRPGSDAGLRDTGAATQLKMKPRKVRKIKAVVIDLGSQYCKCGYAGEPRPTYFISSTVGKRCPEAADAGDTRKGTLVGHELLNTETPLKLVNPLKHGIVVDWDCVQDIWEYIFRTAMKILPEEHAVLVSDPPLSPSSNREKYAELMFGTFGIPAMHVTSQSLLSIYSYGKTSGLVVESGHGVSHVVPISEGDVLPGLTSRADYAGGDLTNYLMQLLNEAGHAFTDDHLHIIEHIKKKCCYAAFLPEEELGLVPEELRVDYELPDGKLITIGQERFRCSEMLFQPSLAGSTQPGLPELTAACLGRCQDTGFKEEMAANVLLCGGCTMLDGFPERFQRELSLLCPGDSPAVAAAPERKTSVWTGGSILASLQAFQQLWVSKEEFQERGSMAIYSKC.

The segment at 1-35 is disordered; that stretch reads MATRNSPMALGTAQGDPGEAGTRPGSDAGLRDTGA. Position 6 is a phosphoserine (S6).

This sequence belongs to the actin family.

Its subcellular location is the cytoplasm. The protein resides in the cytoskeleton. In Macaca fascicularis (Crab-eating macaque), this protein is Actin-like protein 7B (ACTL7B).